The chain runs to 777 residues: Hepatocyte growth factor-regulated tyrosine kinase substrate (777 aa).

The 129-residue stretch at 15–143 (ATSQLLLETD…IMKVEGHVFP (129 aa)) folds into the VHS domain. Residues 160-220 (WVDAEECHRC…VCEPCFEQLN (61 aa)) form an FYVE-type zinc finger. Residues C166, C169, C182, C185, C190, and C193 each contribute to the Zn(2+) site. K207 carries the N6-acetyllysine modification. Zn(2+) contacts are provided by C212 and C215. A disordered region spans residues 223-319 (AEGKAASTTE…SPVNSSAPLA (97 aa)). Residues 225 to 541 (GKAASTTELP…QRLQEQEKER (317 aa)) form an interaction with SNX1 region. Positions 258–277 (QEEEELQLALALSQSEAEEK) constitute a UIM domain. Positions 292-311 (AEPTPVASSAPPASSLYSSP) are enriched in low complexity. A phosphotyrosine mark is found at Y308, Y329, and Y334. A disordered region spans residues 338 to 370 (KQEEARKSPTPSAPVPLTEPTAQPGEGHAIPAN). Residues 443-541 (SINTMHPQLL…QRLQEQEKER (99 aa)) form an interaction with SNAP25 and TRAK2 region. An interaction with STAM region spans residues 452–570 (LELLNQLDER…FSLPYAQLQA (119 aa)). The interaction with NF2 stretch occupies residues 478–777 (ARGALSALRE…GSEAQLISFD (300 aa)). An N6-succinyllysine modification is found at K549. The span at 645-658 (AAAQGPAGPTTSPA) shows a compositional bias: low complexity. Disordered regions lie at residues 645–698 (AAAQ…YMGS) and 712–777 (NLMP…ISFD). Composition is skewed to polar residues over residues 659 to 698 (YSSY…YMGS) and 730 to 739 (PYISGQQPVY). Low complexity predominate over residues 753-777 (PPVAQQPPAQGPPAQGSEAQLISFD).

As to quaternary structure, component of the ESCRT-0 complex composed of STAM or STAM2 and HGS. Part of a complex at least composed of HSG, STAM2 (or probably STAM) and EPS15. Interacts with STAM. Interacts with STAM2. Interacts with EPS15; the interaction is direct, calcium-dependent and inhibited by SNAP25. Identified in a complex with STAM and LITAF. Found in a complex with STAM and E3 ligase ITCH and DTX3L. Interacts with E3 ligase DTX3L; the interaction brings together STAM and HSG, promotes their recruitment to early endosomes and decreases STAM and HGS ubiquitination by ITCH. Interacts with NF2; the interaction is direct. Interacts with ubiquitin; the interaction is direct. Interacts with VPS37C. Interacts with SMAD1, SMAD2 and SMAD3. Interacts with TSG101; the interaction mediates the association with the ESCRT-I complex. Interacts with SNAP25; the interaction is direct and decreases with addition of increasing concentrations of free calcium. Interacts with SNX1; the interaction is direct. Component of a 550 kDa membrane complex at least composed of HGS and SNX1 but excluding EGFR. Interacts with TRAK1. Interacts with TRAK2. Component of the CART complex, at least composed of ACTN4, HGS/HRS, MYO5B and TRIM3. Interacts (via UIM domain) with UBQLN1 (via ubiquitin-like domain). Interacts with ARRDC3. Identified in a complex containing at least ARRDC4, AVPR2 and HGS. Interacts with LAPTM4B; promotes HGS ubiquitination. In terms of processing, phosphorylated on Tyr-334. A minor site of phosphorylation on Tyr-329 is detected. Phosphorylation occurs in response to EGF, IL-2, GM-CSF and HGF. Ubiquitinated by ITCH.

The protein resides in the cytoplasm. It is found in the early endosome membrane. The protein localises to the endosome. Its subcellular location is the multivesicular body membrane. Functionally, involved in intracellular signal transduction mediated by cytokines and growth factors. When associated with STAM it suppresses DNA signaling upon stimulation by IL-2 and GM-CSF. Could be a direct effector of PI3-kinase in vesicular pathway via early endosomes and may regulate trafficking to early and late endosomes by recruiting clathrin. May concentrate ubiquitinated receptors within clathrin-coated regions. Involved in down-regulation of receptor tyrosine kinase via multivesicular body (MVBs) when complexed with STAM (ESCRT-0 complex). The ESCRT-0 complex binds ubiquitin and acts as a sorting machinery that recognizes ubiquitinated receptors and transfers them to further sequential lysosomal sorting/trafficking processes. May contribute to the efficient recruitment of SMADs to the activin receptor complex. Involved in receptor recycling via its association with the CART complex, a multiprotein complex required for efficient transferrin receptor recycling but not for EGFR degradation. This Bos taurus (Bovine) protein is Hepatocyte growth factor-regulated tyrosine kinase substrate (HGS).